The chain runs to 606 residues: Pro-secreted protein ORF2 (606 aa).

An N-terminal signal peptide occupies residues 1-19 (MSLCRLLLMLAMCCGVSRG). The interval 22 to 54 (TLPAGGRRGQRRRDNSAQWSTQQRPEGAVGPAP) is disordered. A Nuclear localization signal motif is present at residues 28–34 (RRGQRRR). Residue Asn255 is glycosylated (N-linked (GlcNAc...) asparagine; by host). Residues 313 to 339 (ILGVLFNLADTVLGGLPSTLLRAASGQ) are particle formation. N-linked (GlcNAc...) asparagine; by host glycosylation is present at Asn510.

This sequence belongs to the hepevirus capsid protein family. As to quaternary structure, homodimer. Self-assembles to form the capsid. The capsid is dominated by dimers that define the 30 morphological units. Interacts with phosphorylated protein ORF3. Post-translationally, N-glycosylated.

It is found in the secreted. The protein localises to the virion. It localises to the host cytoplasm. Its subcellular location is the host endoplasmic reticulum. The protein resides in the host Golgi apparatus. It is found in the host cell surface. The protein localises to the host nucleus. Its function is as follows. Plays a role in the inhibition of host antibody-mediated neutralization without blocking viral cell entry. Functionally, forms an icosahedral capsid with a T=1 symmetry and a 34 nm diameter. The capsid is composed of 60 copies linked to each other. Binds to the 5' end of the genomic RNA to mediate genome encapsidation. This chain is Pro-secreted protein ORF2, found in Gallus gallus (Chicken).